Consider the following 444-residue polypeptide: Glutamate-1-semialdehyde 2,1-aminomutase (444 aa).

At lysine 267 the chain carries N6-(pyridoxal phosphate)lysine.

This sequence belongs to the class-III pyridoxal-phosphate-dependent aminotransferase family. HemL subfamily. Homodimer. Pyridoxal 5'-phosphate is required as a cofactor.

The protein localises to the cytoplasm. The catalysed reaction is (S)-4-amino-5-oxopentanoate = 5-aminolevulinate. Its pathway is porphyrin-containing compound metabolism; protoporphyrin-IX biosynthesis; 5-aminolevulinate from L-glutamyl-tRNA(Glu): step 2/2. The chain is Glutamate-1-semialdehyde 2,1-aminomutase from Xylella fastidiosa (strain Temecula1 / ATCC 700964).